Here is a 341-residue protein sequence, read N- to C-terminus: tRNA N6-adenosine threonylcarbamoyltransferase (341 aa).

Fe cation contacts are provided by histidine 111 and histidine 115. Substrate is bound by residues 134 to 138 (LVSGG), aspartate 167, glycine 180, and asparagine 276. Aspartate 304 provides a ligand contact to Fe cation.

It belongs to the KAE1 / TsaD family. It depends on Fe(2+) as a cofactor.

It localises to the cytoplasm. The catalysed reaction is L-threonylcarbamoyladenylate + adenosine(37) in tRNA = N(6)-L-threonylcarbamoyladenosine(37) in tRNA + AMP + H(+). Functionally, required for the formation of a threonylcarbamoyl group on adenosine at position 37 (t(6)A37) in tRNAs that read codons beginning with adenine. Is involved in the transfer of the threonylcarbamoyl moiety of threonylcarbamoyl-AMP (TC-AMP) to the N6 group of A37, together with TsaE and TsaB. TsaD likely plays a direct catalytic role in this reaction. The chain is tRNA N6-adenosine threonylcarbamoyltransferase from Pseudomonas syringae pv. tomato (strain ATCC BAA-871 / DC3000).